Here is a 122-residue protein sequence, read N- to C-terminus: uncharacterized protein (122 aa).

This is an uncharacterized protein from Rickettsia conorii (strain ATCC VR-613 / Malish 7).